Here is a 431-residue protein sequence, read N- to C-terminus: UPF0597 protein LCA_0156 (431 aa).

This sequence belongs to the UPF0597 family.

The protein is UPF0597 protein LCA_0156 of Latilactobacillus sakei subsp. sakei (strain 23K) (Lactobacillus sakei subsp. sakei).